A 53-amino-acid chain; its full sequence is Conotoxin Cal6.31 (53 aa).

Positions 1-24 (MKLTCVLIAAVLLLAVCQLDSADA) are cleaved as a signal peptide. 3 cysteine pairs are disulfide-bonded: Cys-29/Cys-43, Cys-36/Cys-47, and Cys-42/Cys-51.

It belongs to the conotoxin O1 superfamily. As to expression, expressed by the venom duct.

The protein resides in the secreted. Its function is as follows. Probable neurotoxin. The chain is Conotoxin Cal6.31 from Californiconus californicus (California cone).